Reading from the N-terminus, the 159-residue chain is Keratin-associated protein 9-8 (159 aa).

Repeat copies occupy residues 8 to 12 (CCQPT), 13 to 17 (CCRTT), 32 to 36 (CCQPS), 37 to 41 (CCVSS), 46 to 50 (CCRPT), 51 to 55 (CCQNT), 56 to 60 (CCQPI), 65 to 69 (CCQPS), 70 to 74 (CCSTP), 75 to 79 (CCQPT), 80 to 84 (CCGQT), 129 to 133 (CCRPA), 134 to 138 (CCETT), 139 to 142 (CCRT), and 153 to 157 (CCQPS). Residues 8-157 (CCQPTCCRTT…TCVSSCCQPS (150 aa)) are 15 X 5 AA repeats of C-C-[RQVSGE]-[SPSNQ]-[TASPI].

This sequence belongs to the KRTAP type 9 family. As to quaternary structure, interacts with hair keratins.

Functionally, in the hair cortex, hair keratin intermediate filaments are embedded in an interfilamentous matrix, consisting of hair keratin-associated proteins (KRTAP), which are essential for the formation of a rigid and resistant hair shaft through their extensive disulfide bond cross-linking with abundant cysteine residues of hair keratins. The matrix proteins include the high-sulfur and high-glycine-tyrosine keratins. This is Keratin-associated protein 9-8 (KRTAP9-8) from Homo sapiens (Human).